We begin with the raw amino-acid sequence, 578 residues long: MKDTIRQLIQQALTQLVTDGVLPEGLSPAIQVENARDKTHGDFASNIAMMLAKPAGMKPRDLAEKLINALPASADISKVEIAGPGFLNFFQNTDALANRLDAALADAHLGARKAGPAQKVVIDMSAPNLAKEMHVGHLRSTIIGDSVARVLEFLGDNVIRQNHVGDWGTQFGMLMAYLQENPITSDELSDLENFYRAAKKRFDESEEFATRARGLVVKLQAGDPECLALWTRFKDISLSHCQKTYELLNVKLTMADVMGESAYNDDLANVVADLKAKGLLVEDQGAQCVFLDEFKNSEGDPLPVIVQKADGGYLYATTDLAAVRYRSNVLKADRALYFVDQRQALHFNQVFEVARRAGFVGHPMQMEHMGFGTMNGADGRPFKTRDGGTVKLIDLLTEAKERAYALVKEKNPSLADDELRHIGEVVGIGAVKYADLSKHRTSDYSFNFELMLNFEGNTAPYLLYAYTRVAGVFRKLGKGFDEVDGKIVLHAAHEQDLAARLAQFGEILNNVAEKGTPHVLCSYLYDLAGLFSSFYENCPILAAETPSQQQSRLRLAALTGRTLKQGLELLGLETLERM.

Positions 127 to 137 (PNLAKEMHVGH) match the 'HIGH' region motif.

The protein belongs to the class-I aminoacyl-tRNA synthetase family. In terms of assembly, monomer.

Its subcellular location is the cytoplasm. The enzyme catalyses tRNA(Arg) + L-arginine + ATP = L-arginyl-tRNA(Arg) + AMP + diphosphate. This Pseudomonas putida (strain ATCC 700007 / DSM 6899 / JCM 31910 / BCRC 17059 / LMG 24140 / F1) protein is Arginine--tRNA ligase.